A 348-amino-acid chain; its full sequence is Glycerol-1-phosphate dehydrogenase [NAD(P)+] (348 aa).

NAD(+) contacts are provided by residues 94–98 and 116–119; these read GKPID and TAAS. Residue Asp121 participates in substrate binding. Ser125 contributes to the NAD(+) binding site. Asp168 is a substrate binding site. Zn(2+)-binding residues include Asp168 and His248. His252 is a binding site for substrate. His264 contacts Zn(2+).

It belongs to the glycerol-1-phosphate dehydrogenase family. It depends on Zn(2+) as a cofactor.

The protein localises to the cytoplasm. It carries out the reaction sn-glycerol 1-phosphate + NAD(+) = dihydroxyacetone phosphate + NADH + H(+). It catalyses the reaction sn-glycerol 1-phosphate + NADP(+) = dihydroxyacetone phosphate + NADPH + H(+). It functions in the pathway membrane lipid metabolism; glycerophospholipid metabolism. Functionally, catalyzes the NAD(P)H-dependent reduction of dihydroxyacetonephosphate (DHAP or glycerone phosphate) to glycerol 1-phosphate (G1P). The G1P thus generated is used as the glycerophosphate backbone of phospholipids in the cellular membranes of Archaea. The chain is Glycerol-1-phosphate dehydrogenase [NAD(P)+] from Haloquadratum walsbyi (strain DSM 16790 / HBSQ001).